The primary structure comprises 1603 residues: Vitellogenin-5 (1603 aa).

The signal sequence occupies residues 1–15 (MKSIIIASLVALAIA). Positions 24 to 685 (FSPKSEYVYK…EKNAFLPKEV (662 aa)) constitute a Vitellogenin domain. A VWFD domain is found at 1306-1475 (ATCKVDQSEV…SYLLKNEECE (170 aa)). 2 disulfides stabilise this stretch: cysteine 1308/cysteine 1438 and cysteine 1330/cysteine 1474. The interval 1492–1513 (NREEKKSDYESSSDYESNYDEK) is disordered.

Post-translationally, vitellogenin 5 undergoes little if any processing before being packaged into yolk platelets. Expressed in the intestine of adult hermaphrodites.

The protein localises to the secreted. In terms of biological role, precursor of the egg-yolk proteins that are sources of nutrients during embryonic development. Together with other vitellogenins, may play a role in modulating life-span, acting via induction of autophagy and lysosomal lipolysis. This is Vitellogenin-5 (vit-5) from Caenorhabditis elegans.